The chain runs to 145 residues: Probable 4-amino-4-deoxy-L-arabinose-phosphoundecaprenol flippase subunit ArnF (145 aa).

Residues 1-3 are Cytoplasmic-facing; sequence MAH. Residues 4-24 form a helical membrane-spanning segment; the sequence is LTLSIRGLLLALMSVLLISVA. Residues 25-61 lie on the Periplasmic side of the membrane; sequence QLSMKWGMGTLNQLWSDLVMLWQGEDYSSLFSQALAP. Residues 62-82 traverse the membrane as a helical segment; it reads VMAVGAGLFCYALSMACWVMA. Over 83–89 the chain is Cytoplasmic; that stretch reads LKRLPLS. The chain crosses the membrane as a helical span at residues 90–110; it reads IAYPLLSLSYVLVYLGAVYLP. At 111–114 the chain is on the periplasmic side; sequence WLNE. The helical transmembrane segment at 115-135 threads the bilayer; that stretch reads PLSWVKGTGIFLILLGLIFVL. Residues 136–145 lie on the Cytoplasmic side of the membrane; sequence PKKNQTSDKS.

Belongs to the ArnF family. In terms of assembly, heterodimer of ArnE and ArnF.

It localises to the cell inner membrane. It functions in the pathway bacterial outer membrane biogenesis; lipopolysaccharide biosynthesis. Translocates 4-amino-4-deoxy-L-arabinose-phosphoundecaprenol (alpha-L-Ara4N-phosphoundecaprenol) from the cytoplasmic to the periplasmic side of the inner membrane. This is Probable 4-amino-4-deoxy-L-arabinose-phosphoundecaprenol flippase subunit ArnF from Shewanella sediminis (strain HAW-EB3).